A 294-amino-acid polypeptide reads, in one-letter code: Release factor glutamine methyltransferase (294 aa).

The S-adenosyl-L-methionine site is built by E148 and N201. 201–204 (NPPY) contributes to the substrate binding site.

The protein belongs to the protein N5-glutamine methyltransferase family. PrmC subfamily.

The enzyme catalyses L-glutaminyl-[peptide chain release factor] + S-adenosyl-L-methionine = N(5)-methyl-L-glutaminyl-[peptide chain release factor] + S-adenosyl-L-homocysteine + H(+). Its function is as follows. Methylates the class 1 translation termination release factors RF1/PrfA and RF2/PrfB on the glutamine residue of the universally conserved GGQ motif. The protein is Release factor glutamine methyltransferase of Bifidobacterium longum (strain NCC 2705).